Reading from the N-terminus, the 422-residue chain is Histidine--tRNA ligase (422 aa).

The protein belongs to the class-II aminoacyl-tRNA synthetase family. In terms of assembly, homodimer.

The protein resides in the cytoplasm. The enzyme catalyses tRNA(His) + L-histidine + ATP = L-histidyl-tRNA(His) + AMP + diphosphate + H(+). This is Histidine--tRNA ligase from Prosthecochloris aestuarii (strain DSM 271 / SK 413).